Here is a 348-residue protein sequence, read N- to C-terminus: WW domain binding protein 1-like (348 aa).

A helical membrane pass occupies residues 42 to 62 (LWWFWLVWTVVIILSCCCVCH). 2 disordered regions span residues 111–253 (VVNR…RRFT) and 306–348 (CLSS…GSPS). A compositionally biased stretch (pro residues) spans 134–155 (LPPPPQGGPPGGSPPGADPPPQ). Residues 156 to 177 (GSQGAQSSPLSGPSRSSTRPPS) are compositionally biased toward low complexity. Ser177 carries the phosphoserine modification. Over residues 220–234 (SECKEELLKDSRSER) the composition is skewed to basic and acidic residues. The segment covering 331–348 (NTINEQDSPNSQHSGSPS) has biased composition (polar residues).

The protein localises to the membrane. This Mus musculus (Mouse) protein is WW domain binding protein 1-like (Wbp1l).